Here is a 180-residue protein sequence, read N- to C-terminus: Large ribosomal subunit protein uL5 (180 aa).

The protein belongs to the universal ribosomal protein uL5 family. Part of the 50S ribosomal subunit; part of the 5S rRNA/L5/L18/L25 subcomplex. Contacts the 5S rRNA and the P site tRNA. Forms a bridge to the 30S subunit in the 70S ribosome.

Functionally, this is one of the proteins that bind and probably mediate the attachment of the 5S RNA into the large ribosomal subunit, where it forms part of the central protuberance. In the 70S ribosome it contacts protein S13 of the 30S subunit (bridge B1b), connecting the 2 subunits; this bridge is implicated in subunit movement. Contacts the P site tRNA; the 5S rRNA and some of its associated proteins might help stabilize positioning of ribosome-bound tRNAs. The sequence is that of Large ribosomal subunit protein uL5 from Roseiflexus castenholzii (strain DSM 13941 / HLO8).